Reading from the N-terminus, the 192-residue chain is MLGLRLIVGLGNPGSEHTKTRHNAGFRFVDGLVQREGQRWMLESKLFAHVARVFIAGQWVWLLRPVTFMNLSGKSICAGLSFWKIKPEQMLVAHDELDFPPGAVRLKFDGGHGGQNGLRDITKLLGHGRFHRLRVGIGHPGHKDRVVNWVLGCPTCEENIAIDAALERASAVLPLVVAGDFDEAMKKLHTVV.

His-17 serves as a coordination point for tRNA. The Proton acceptor role is filled by His-22. TRNA is bound by residues Phe-68, Asn-70, and Asn-116.

Belongs to the PTH family. As to quaternary structure, monomer.

Its subcellular location is the cytoplasm. It catalyses the reaction an N-acyl-L-alpha-aminoacyl-tRNA + H2O = an N-acyl-L-amino acid + a tRNA + H(+). Its function is as follows. Hydrolyzes ribosome-free peptidyl-tRNAs (with 1 or more amino acids incorporated), which drop off the ribosome during protein synthesis, or as a result of ribosome stalling. In terms of biological role, catalyzes the release of premature peptidyl moieties from peptidyl-tRNA molecules trapped in stalled 50S ribosomal subunits, and thus maintains levels of free tRNAs and 50S ribosomes. In Xylella fastidiosa (strain 9a5c), this protein is Peptidyl-tRNA hydrolase.